An 800-amino-acid chain; its full sequence is Endoglucanase (800 aa).

The first 30 residues, 1 to 30, serve as a signal peptide directing secretion; it reads MMLRKKTKQLISSILILVLLLSLFPTALAA. Residue E190 is the Proton donor of the active site. Catalysis depends on E305, which acts as the Nucleophile. Positions 761–800 are disordered; that stretch reads AATTEPVEPEPVDPGEETPPVDEKEAKTEQKEAEKEEKEE. Over residues 767–780 the composition is skewed to acidic residues; that stretch reads VEPEPVDPGEETPP. Basic and acidic residues predominate over residues 781-800; sequence VDEKEAKTEQKEAEKEEKEE.

The protein belongs to the glycosyl hydrolase 5 (cellulase A) family.

The catalysed reaction is Endohydrolysis of (1-&gt;4)-beta-D-glucosidic linkages in cellulose, lichenin and cereal beta-D-glucans.. The sequence is that of Endoglucanase from Halalkalibacter akibai (strain ATCC 43226 / DSM 21942 / CIP 109018 / JCM 9157 / 1139) (Bacillus akibai).